The primary structure comprises 148 residues: Large ribosomal subunit protein bL9 (148 aa).

Belongs to the bacterial ribosomal protein bL9 family.

In terms of biological role, binds to the 23S rRNA. The protein is Large ribosomal subunit protein bL9 of Hydrogenobaculum sp. (strain Y04AAS1).